The following is a 222-amino-acid chain: Thiamine-phosphate synthase (222 aa).

Residues 42–46 and Asn74 contribute to the 4-amino-2-methyl-5-(diphosphooxymethyl)pyrimidine site; that span reads QYRDK. Mg(2+)-binding residues include Asp75 and Asp94. Residue Thr113 participates in 4-amino-2-methyl-5-(diphosphooxymethyl)pyrimidine binding. 140-142 is a 2-[(2R,5Z)-2-carboxy-4-methylthiazol-5(2H)-ylidene]ethyl phosphate binding site; it reads SAT. Residue Lys143 participates in 4-amino-2-methyl-5-(diphosphooxymethyl)pyrimidine binding. Gly169 contributes to the 2-[(2R,5Z)-2-carboxy-4-methylthiazol-5(2H)-ylidene]ethyl phosphate binding site.

The protein belongs to the thiamine-phosphate synthase family. Requires Mg(2+) as cofactor.

The catalysed reaction is 2-[(2R,5Z)-2-carboxy-4-methylthiazol-5(2H)-ylidene]ethyl phosphate + 4-amino-2-methyl-5-(diphosphooxymethyl)pyrimidine + 2 H(+) = thiamine phosphate + CO2 + diphosphate. It catalyses the reaction 2-(2-carboxy-4-methylthiazol-5-yl)ethyl phosphate + 4-amino-2-methyl-5-(diphosphooxymethyl)pyrimidine + 2 H(+) = thiamine phosphate + CO2 + diphosphate. The enzyme catalyses 4-methyl-5-(2-phosphooxyethyl)-thiazole + 4-amino-2-methyl-5-(diphosphooxymethyl)pyrimidine + H(+) = thiamine phosphate + diphosphate. It participates in cofactor biosynthesis; thiamine diphosphate biosynthesis; thiamine phosphate from 4-amino-2-methyl-5-diphosphomethylpyrimidine and 4-methyl-5-(2-phosphoethyl)-thiazole: step 1/1. Its function is as follows. Condenses 4-methyl-5-(beta-hydroxyethyl)thiazole monophosphate (THZ-P) and 2-methyl-4-amino-5-hydroxymethyl pyrimidine pyrophosphate (HMP-PP) to form thiamine monophosphate (TMP). The chain is Thiamine-phosphate synthase from Marinobacter nauticus (strain ATCC 700491 / DSM 11845 / VT8) (Marinobacter aquaeolei).